The following is a 164-amino-acid chain: MADNSFDIVSKIDLQEVSNAIQQATKEIQTRFDLKDTKSEIKLEKDAIELHSSDEYKLKAVTDILQGKLVKRNVPLKGLTYGTIESAAGATVRQKITMQQGIPGEKAKEIVRVIKDSKKKAQASIQGDTVRVSSKDRDTLQEIIALIKNKDFGIDVQFTNYRSN.

Belongs to the YajQ family.

Its function is as follows. Nucleotide-binding protein. In Koribacter versatilis (strain Ellin345), this protein is Nucleotide-binding protein Acid345_2028.